Here is a 97-residue protein sequence, read N- to C-terminus: Putative membrane protein insertion efficiency factor (97 aa).

The protein belongs to the UPF0161 family.

The protein resides in the cell inner membrane. Could be involved in insertion of integral membrane proteins into the membrane. This is Putative membrane protein insertion efficiency factor from Chlamydia muridarum (strain MoPn / Nigg).